Here is a 555-residue protein sequence, read N- to C-terminus: Potassium-transporting ATPase potassium-binding subunit (555 aa).

A run of 10 helical transmembrane segments spans residues 2 to 22 (IWVA…PTGV), 60 to 80 (QYAL…YFIF), 130 to 150 (IGIT…VMAF), 173 to 193 (VFLP…VPQT), 246 to 266 (MSNI…PFTY), 278 to 298 (ILFV…TTSE), 374 to 394 (AGFV…GLMV), 412 to 432 (LIAV…ALAL), 483 to 503 (LVMF…AASL), and 525 to 545 (GIFI…MLVL).

The protein belongs to the KdpA family. In terms of assembly, the system is composed of three essential subunits: KdpA, KdpB and KdpC.

It localises to the cell membrane. In terms of biological role, part of the high-affinity ATP-driven potassium transport (or Kdp) system, which catalyzes the hydrolysis of ATP coupled with the electrogenic transport of potassium into the cytoplasm. This subunit binds the extracellular potassium ions and delivers the ions to the membrane domain of KdpB through an intramembrane tunnel. This is Potassium-transporting ATPase potassium-binding subunit from Bacillus cereus (strain B4264).